A 142-amino-acid chain; its full sequence is Hemoglobin subunit alpha (142 aa).

The Globin domain maps to 2 to 142 (VLSAADKTNV…LSTVLTSKYR (141 aa)). Residue serine 4 is modified to Phosphoserine. Lysine 8 is modified (N6-succinyllysine). Threonine 9 is modified (phosphothreonine). Position 12 is an N6-succinyllysine (lysine 12). Lysine 17 bears the N6-acetyllysine; alternate mark. N6-succinyllysine; alternate is present on lysine 17. Tyrosine 25 carries the post-translational modification Phosphotyrosine. Serine 36 is modified (phosphoserine). N6-succinyllysine is present on lysine 41. Phosphoserine is present on serine 50. Glutamine 59 is an O2 binding site. Heme b is bound at residue histidine 88. A Phosphothreonine modification is found at threonine 109. Serine 125 carries the post-translational modification Phosphoserine. A phosphothreonine mark is found at threonine 135 and threonine 138. Serine 139 carries the phosphoserine modification.

This sequence belongs to the globin family. In terms of assembly, heterotetramer of two alpha chains and two beta chains. In terms of tissue distribution, red blood cells.

Functionally, involved in oxygen transport from the lung to the various peripheral tissues. In terms of biological role, hemopressin acts as an antagonist peptide of the cannabinoid receptor CNR1. Hemopressin-binding efficiently blocks cannabinoid receptor CNR1 and subsequent signaling. In Monodelphis domestica (Gray short-tailed opossum), this protein is Hemoglobin subunit alpha (HBA).